The sequence spans 364 residues: Aminomethyltransferase (364 aa).

It belongs to the GcvT family. The glycine cleavage system is composed of four proteins: P, T, L and H.

The catalysed reaction is N(6)-[(R)-S(8)-aminomethyldihydrolipoyl]-L-lysyl-[protein] + (6S)-5,6,7,8-tetrahydrofolate = N(6)-[(R)-dihydrolipoyl]-L-lysyl-[protein] + (6R)-5,10-methylene-5,6,7,8-tetrahydrofolate + NH4(+). In terms of biological role, the glycine cleavage system catalyzes the degradation of glycine. This Escherichia coli (strain 55989 / EAEC) protein is Aminomethyltransferase.